The following is a 275-amino-acid chain: Putative carbamate hydrolase RutD (275 aa).

The protein belongs to the AB hydrolase superfamily. Hydrolase RutD family.

It catalyses the reaction carbamate + 2 H(+) = NH4(+) + CO2. In terms of biological role, involved in pyrimidine catabolism. May facilitate the hydrolysis of carbamate, a reaction that can also occur spontaneously. The protein is Putative carbamate hydrolase RutD of Escherichia coli (strain UTI89 / UPEC).